The following is a 280-amino-acid chain: Fructose-1,6-bisphosphatase class 1 (280 aa).

The Mg(2+) site is built by Glu64, Asp83, Leu85, and Asp86. Substrate-binding positions include 86 to 89 (DGSS), Tyr189, and Lys220. Glu226 contacts Mg(2+).

This sequence belongs to the FBPase class 1 family. As to quaternary structure, homotetramer. It depends on Mg(2+) as a cofactor.

It is found in the cytoplasm. The catalysed reaction is beta-D-fructose 1,6-bisphosphate + H2O = beta-D-fructose 6-phosphate + phosphate. The protein operates within carbohydrate biosynthesis; gluconeogenesis. This is Fructose-1,6-bisphosphatase class 1 from Campylobacter jejuni subsp. jejuni serotype O:6 (strain 81116 / NCTC 11828).